Consider the following 704-residue polypeptide: Elongation factor G (704 aa).

A tr-type G domain is found at 8-290; sequence ARYRNIGISA…AVIDYLPSPV (283 aa). Residues 17-24, 88-92, and 142-145 contribute to the GTP site; these read AHIDAGKT, DTPGH, and NKMD. Residues lysine 504 and lysine 643 each carry the N6-acetyllysine modification.

It belongs to the TRAFAC class translation factor GTPase superfamily. Classic translation factor GTPase family. EF-G/EF-2 subfamily.

The protein localises to the cytoplasm. Catalyzes the GTP-dependent ribosomal translocation step during translation elongation. During this step, the ribosome changes from the pre-translocational (PRE) to the post-translocational (POST) state as the newly formed A-site-bound peptidyl-tRNA and P-site-bound deacylated tRNA move to the P and E sites, respectively. Catalyzes the coordinated movement of the two tRNA molecules, the mRNA and conformational changes in the ribosome. The polypeptide is Elongation factor G (Shigella flexneri).